We begin with the raw amino-acid sequence, 6298 residues long: Adhesion G-protein coupled receptor V1 (6298 aa).

The first 28 residues, 1-28, serve as a signal peptide directing secretion; it reads MSVTSEPGMISSFLLVYLSTLFISFVFG. Calx-beta domains follow at residues 29–116, 132–236, 251–362, 389–489, 646–746, 764–862, 877–980, 994–1094, 1108–1208, 1440–1540, 1562–1662, 1706–1805, 1846–1948, 1962–2075, 2103–2202, 2218–2320, 2437–2537, 2576–2672, 2687–2786, 2810–2921, 2945–3044, and 3067–3167; these read EAEI…FHLT, ASVT…IQLR, VEII…IMLL, YGVL…LTIL, PAIA…TLSL, DLII…VILS, VNIT…IILL, ASLR…IVLF, ATVI…LRLV, AMPR…FLLK, QKSD…VTLV, TGLP…VELL, ILVT…VSIL, TLTI…IELF, HLVI…VQLL, VITI…VQLA, TLCL…FLIS, FIIY…VRLG, VTVN…VVLY, LTVE…VNLT, QIVI…LLLT, and DGPG…VCTL. Residues 29 to 5901 are Extracellular-facing; it reads EAEIRFTGQT…TDNSSSYNEA (5873 aa). EAR repeat units lie at residues 3251 to 3292, 3293 to 3341, 3344 to 3389, 3391 to 3435, 3437 to 3484, and 3488 to 3530; these read VFSI…RWQG, TFVP…MLTA, RLVL…RWNG, NFAW…TWSG, QFIN…VWEM, and SLRY…CWNS. 13 Calx-beta domains span residues 3581 to 3622, 3636 to 3736, 3772 to 3872, 3919 to 4003, 4017 to 4120, 4135 to 4235, 4251 to 4351, 4384 to 4484, 4507 to 4607, 4628 to 4728, 4989 to 5089, 5281 to 5325, and 5361 to 5461; these read QSDF…RVQL, SVRV…VVTL, GAVR…VTIA, GGVI…ISLV, VNVV…IELT, SVII…EFQL, ARIT…LAIT, RIII…ILLI, SPFG…IVQL, KFGD…AVQL, TTAE…INLT, AVEE…YVFL, and IGFS…FVEL. A GAIN-B domain is found at 5740 to 5896; sequence SILALHWNPQ…AVYAQTDNSS (157 aa). 2 disulfides stabilise this stretch: C5849–C5878 and C5866–C5880. Residues 5849–5896 are GPS; sequence CLLWNQAAASWLSDSQFCKVVEDASDYVECACSHMSVYAVYAQTDNSS. Residues 5902–5922 traverse the membrane as a helical segment; sequence FFSAGLICISGLCLAVVSHMF. Residues 5923–5932 are Cytoplasmic-facing; that stretch reads CARHSMFAAK. The chain crosses the membrane as a helical span at residues 5933-5953; that stretch reads LLTHMMVASLGTQILFLASAY. The Extracellular portion of the chain corresponds to 5954–5973; the sequence is ASPHLSEESCSAVAAVAHYL. The helical transmembrane segment at 5974–5994 threads the bilayer; sequence YLCQFSWMLIQSVNFWYVLVV. Topologically, residues 5995–6003 are cytoplasmic; the sequence is SDEHTERRC. The helical transmembrane segment at 6004 to 6024 threads the bilayer; that stretch reads LLFCLLSWGLPSFVVILLILI. The Extracellular segment spans residues 6025–6052; that stretch reads LRGIYHRSMPQIYGLIHGDLCFIPNIYA. The chain crosses the membrane as a helical span at residues 6053–6073; that stretch reads ALFTAALVPLMCLVVVFVVFI. Over 6074–6097 the chain is Cytoplasmic; it reads HAYQLKPQWKGYDDVFRGRTNAAE. The chain crosses the membrane as a helical span at residues 6098-6118; the sequence is IPLILYLFALISMTWLWGGLH. Residues 6119-6126 lie on the Extracellular side of the membrane; that stretch reads MAYGHFWM. The chain crosses the membrane as a helical span at residues 6127–6147; sequence LVLFVIFNSLQGLYVFVVYFI. Over 6148 to 6298 the chain is Cytoplasmic; the sequence is LHNQTCCPMK…RRIPIADTHL (151 aa). Disordered regions lie at residues 6206-6242 and 6264-6283; these read ERSS…GSLI and SVSD…LTDS. Polar residues-rich tracts occupy residues 6208 to 6226 and 6265 to 6283; these read SSFQ…SPQN and VSDN…LTDS.

The protein belongs to the G-protein coupled receptor 2 family. Adhesion G-protein coupled receptor (ADGR) subfamily. Forms a heterodimer, consisting of a large extracellular region (alpha subunit) non-covalently linked to a seven-transmembrane moiety (beta subunit). Interacts (via the cytoplasmic region) with PDZD7. Component of USH2 complex, composed of ADGRV1, PDZD7, USH2A and WHRN. Interacts with USH2A and WHRN. Interacts (via the cytoplasmic region) with MYO7A (via MyTH4-FERM domains). Post-translationally, autoproteolytically cleaved into 2 subunits, an extracellular alpha subunit and a seven-transmembrane subunit. Expressed by oligodendrocytes. In midbrain, enriched in the myelinated regions of the superior and inferior colliculi. In the cochlea, expressed in developing hair cells. Expressed by photoreceptors in the retina.

The protein localises to the cell membrane. It is found in the cell projection. It localises to the stereocilium membrane. Its subcellular location is the photoreceptor inner segment. The protein resides in the secreted. G-protein coupled receptor which has an essential role in the development of hearing and vision. Couples to G-alpha(i)-proteins, GNAI1/2/3, G-alpha(q)-proteins, GNAQ, as well as G-alpha(s)-proteins, GNAS, inhibiting adenylate cyclase (AC) activity and cAMP production. Required for the hair bundle ankle formation, which connects growing stereocilia in developing cochlear hair cells of the inner ear. In response to extracellular calcium, activates kinases PKA and PKC to regulate myelination by inhibiting the ubiquitination of MAG, thus enhancing the stability of this protein in myelin-forming cells of the auditory pathway. In retina photoreceptors, the USH2 complex is required for the maintenance of periciliary membrane complex that seems to play a role in regulating intracellular protein transport. Involved in the regulation of bone metabolism. Functionally, cleaved ADGRV1 beta-subunit couples with G-alpha(i)-proteins, GNAI1/2/3, and constitutively inhibits adenylate cyclase (AC) activity with a stronger effect than full ADGRV1. This is Adhesion G-protein coupled receptor V1 from Mus musculus (Mouse).